We begin with the raw amino-acid sequence, 55 residues long: Large ribosomal subunit protein bL32 (55 aa).

The disordered stretch occupies residues 1–28; that stretch reads MAVQQNKPTRSKRGMRRSHDALTTATLS.

The protein belongs to the bacterial ribosomal protein bL32 family.

In Serratia proteamaculans (strain 568), this protein is Large ribosomal subunit protein bL32.